A 173-amino-acid chain; its full sequence is Ribosome maturation factor RimM (173 aa).

The PRC barrel domain maps to 92 to 165 (EGEFYHADLI…RVVIEMPGEI (74 aa)).

The protein belongs to the RimM family. In terms of assembly, binds ribosomal protein uS19.

The protein localises to the cytoplasm. Functionally, an accessory protein needed during the final step in the assembly of 30S ribosomal subunit, possibly for assembly of the head region. Essential for efficient processing of 16S rRNA. May be needed both before and after RbfA during the maturation of 16S rRNA. It has affinity for free ribosomal 30S subunits but not for 70S ribosomes. The chain is Ribosome maturation factor RimM from Nitrobacter hamburgensis (strain DSM 10229 / NCIMB 13809 / X14).